Reading from the N-terminus, the 696-residue chain is MADPTTYRPAPGTIPTEPGVYKFRDENRRVIYVGKAKNLRSRLSNYFQDVTQLHPRTRQMVFAASSVEWTVVSSEVEALQLEYTWIKRFDPRFNVKYRDDKTYPMLAVSTGERFPRAFFFRGPRRKGVRYFGPYSHAWAVRETLDLLTRVFPMRTCSKGVFNRHESLGRPCLLGYIDKCAAPCVGRVSEEEHREIVDGFTSFMAGHTDKVTRKLNADMMAAAEELDFERAARLRDDLEAIDKVMEKQAVVLGDGTDADIIAFATDQLEAAVQVFNIRGGRIRGQRGWVVDKPGDYAGLLVDATTQPEGDAPETDPALPFLMQDFLVQFYGDAVERAETEAKEDAAVIERRGVDKHSFEEAAPVTRASVVPREILVQVAPNEAEQTLKVLEELRGAGVDARVPQRGDKRALMETVERNAKELLKQHKLKRVGDLTARSAALQELQEALDMEQAPLRIECTDISHIQGTDVVASLVVFEDGLPRKSDYRRYRVKEAAGDGHSNDVASIAEITRRRFLRHNQDKLAVPEAEEFDGSTFSDEKVEEMSTDARRFAYPPQIFIVDGGAPQVAAAQEVFDELGIVDVVLIGLAKRLEEIWLPGDPDPVILPRNSQALFLLQQIRDEAHRFAITYHRQQRSKRMRVSELDSIKGLGQSRRTELVKHFGSVAKLKEASVEDISQVKGFGPKLAEAVYEGLHASK.

The 80-residue stretch at 16–95 (TEPGVYKFRD…IKRFDPRFNV (80 aa)) folds into the GIY-YIG domain. Residues 208-243 (DKVTRKLNADMMAAAEELDFERAARLRDDLEAIDKV) enclose the UVR domain.

It belongs to the UvrC family. As to quaternary structure, interacts with UvrB in an incision complex.

It is found in the cytoplasm. The UvrABC repair system catalyzes the recognition and processing of DNA lesions. UvrC both incises the 5' and 3' sides of the lesion. The N-terminal half is responsible for the 3' incision and the C-terminal half is responsible for the 5' incision. The chain is UvrABC system protein C from Corynebacterium glutamicum (strain R).